Consider the following 828-residue polypeptide: Periplasmic nitrate reductase (828 aa).

Residues 1–31 constitute a signal peptide (tat-type signal); it reads MKLSRRHFMKANAVAAAAAVAGITIPIAVRA. One can recognise a 4Fe-4S Mo/W bis-MGD-type domain in the interval 39 to 95; the sequence is IHWDKAPCRFCGVGCGVLVGTQNGRIVASQGDPDAPVNRGLNCIKGYFLPKIMYGQD. 4 residues coordinate [4Fe-4S] cluster: C46, C49, C53, and C81. Mo-bis(molybdopterin guanine dinucleotide)-binding positions include K83, Q150, N175, C179, 212–219, 243–247, 262–264, M372, Q376, N482, 508–509, K531, D558, and 718–727; these read WGSNMAEM, STYQH, QTD, SD, and TGRVLEHWHT. F794 is a binding site for substrate. Positions 802 and 819 each coordinate Mo-bis(molybdopterin guanine dinucleotide).

Belongs to the prokaryotic molybdopterin-containing oxidoreductase family. NasA/NapA/NarB subfamily. In terms of assembly, component of the periplasmic nitrate reductase NapAB complex composed of NapA and NapB. [4Fe-4S] cluster serves as cofactor. It depends on Mo-bis(molybdopterin guanine dinucleotide) as a cofactor. Post-translationally, predicted to be exported by the Tat system. The position of the signal peptide cleavage has not been experimentally proven.

The protein resides in the periplasm. The catalysed reaction is 2 Fe(II)-[cytochrome] + nitrate + 2 H(+) = 2 Fe(III)-[cytochrome] + nitrite + H2O. Functionally, catalytic subunit of the periplasmic nitrate reductase complex NapAB. Receives electrons from NapB and catalyzes the reduction of nitrate to nitrite. This is Periplasmic nitrate reductase from Pectobacterium carotovorum subsp. carotovorum (strain PC1).